Here is a 335-residue protein sequence, read N- to C-terminus: Holliday junction branch migration complex subunit RuvB (335 aa).

Residues 1 to 181 (MSERVISPEP…FGLLIRLNLY (181 aa)) form a large ATPase domain (RuvB-L) region. Residues leucine 20, arginine 21, glycine 62, lysine 65, threonine 66, threonine 67, 128–130 (EDF), arginine 171, tyrosine 181, and arginine 218 contribute to the ATP site. Threonine 66 serves as a coordination point for Mg(2+). The tract at residues 182-252 (SPEDLEKIVT…IAGAGLALLQ (71 aa)) is small ATPAse domain (RuvB-S). The interval 255–335 (ELGLDDIDRR…KLNHSQKTLF (81 aa)) is head domain (RuvB-H). Residues arginine 310 and arginine 315 each coordinate DNA.

The protein belongs to the RuvB family. In terms of assembly, homohexamer. Forms an RuvA(8)-RuvB(12)-Holliday junction (HJ) complex. HJ DNA is sandwiched between 2 RuvA tetramers; dsDNA enters through RuvA and exits via RuvB. An RuvB hexamer assembles on each DNA strand where it exits the tetramer. Each RuvB hexamer is contacted by two RuvA subunits (via domain III) on 2 adjacent RuvB subunits; this complex drives branch migration. In the full resolvosome a probable DNA-RuvA(4)-RuvB(12)-RuvC(2) complex forms which resolves the HJ.

It localises to the cytoplasm. The enzyme catalyses ATP + H2O = ADP + phosphate + H(+). Functionally, the RuvA-RuvB-RuvC complex processes Holliday junction (HJ) DNA during genetic recombination and DNA repair, while the RuvA-RuvB complex plays an important role in the rescue of blocked DNA replication forks via replication fork reversal (RFR). RuvA specifically binds to HJ cruciform DNA, conferring on it an open structure. The RuvB hexamer acts as an ATP-dependent pump, pulling dsDNA into and through the RuvAB complex. RuvB forms 2 homohexamers on either side of HJ DNA bound by 1 or 2 RuvA tetramers; 4 subunits per hexamer contact DNA at a time. Coordinated motions by a converter formed by DNA-disengaged RuvB subunits stimulates ATP hydrolysis and nucleotide exchange. Immobilization of the converter enables RuvB to convert the ATP-contained energy into a lever motion, pulling 2 nucleotides of DNA out of the RuvA tetramer per ATP hydrolyzed, thus driving DNA branch migration. The RuvB motors rotate together with the DNA substrate, which together with the progressing nucleotide cycle form the mechanistic basis for DNA recombination by continuous HJ branch migration. Branch migration allows RuvC to scan DNA until it finds its consensus sequence, where it cleaves and resolves cruciform DNA. This chain is Holliday junction branch migration complex subunit RuvB, found in Methanoregula boonei (strain DSM 21154 / JCM 14090 / 6A8).